We begin with the raw amino-acid sequence, 309 residues long: Homoserine kinase (309 aa).

95 to 105 (PHGRGLGSSSA) is an ATP binding site.

It belongs to the GHMP kinase family. Homoserine kinase subfamily.

The protein localises to the cytoplasm. It catalyses the reaction L-homoserine + ATP = O-phospho-L-homoserine + ADP + H(+). It functions in the pathway amino-acid biosynthesis; L-threonine biosynthesis; L-threonine from L-aspartate: step 4/5. Catalyzes the ATP-dependent phosphorylation of L-homoserine to L-homoserine phosphate. This Streptomyces coelicolor (strain ATCC BAA-471 / A3(2) / M145) protein is Homoserine kinase.